The sequence spans 273 residues: Dermonecrotic toxin LdSicTox-alphaIB3aiv (273 aa).

The active site involves histidine 5. Mg(2+) contacts are provided by glutamate 25 and aspartate 27. The Nucleophile role is filled by histidine 41. 2 disulfide bridges follow: cysteine 45-cysteine 51 and cysteine 47-cysteine 190. Residue aspartate 85 coordinates Mg(2+).

This sequence belongs to the arthropod phospholipase D family. Class II subfamily. It depends on Mg(2+) as a cofactor. In terms of tissue distribution, expressed by the venom gland.

The protein resides in the secreted. It catalyses the reaction an N-(acyl)-sphingosylphosphocholine = an N-(acyl)-sphingosyl-1,3-cyclic phosphate + choline. It carries out the reaction an N-(acyl)-sphingosylphosphoethanolamine = an N-(acyl)-sphingosyl-1,3-cyclic phosphate + ethanolamine. The catalysed reaction is a 1-acyl-sn-glycero-3-phosphocholine = a 1-acyl-sn-glycero-2,3-cyclic phosphate + choline. The enzyme catalyses a 1-acyl-sn-glycero-3-phosphoethanolamine = a 1-acyl-sn-glycero-2,3-cyclic phosphate + ethanolamine. In terms of biological role, dermonecrotic toxins cleave the phosphodiester linkage between the phosphate and headgroup of certain phospholipids (sphingolipid and lysolipid substrates), forming an alcohol (often choline) and a cyclic phosphate. This toxin acts on sphingomyelin (SM). It may also act on ceramide phosphoethanolamine (CPE), lysophosphatidylcholine (LPC) and lysophosphatidylethanolamine (LPE), but not on lysophosphatidylserine (LPS), and lysophosphatidylglycerol (LPG). It acts by transphosphatidylation, releasing exclusively cyclic phosphate products as second products. Induces dermonecrosis, hemolysis, increased vascular permeability, edema, inflammatory response, and platelet aggregation. This chain is Dermonecrotic toxin LdSicTox-alphaIB3aiv, found in Loxosceles deserta (Desert recluse spider).